We begin with the raw amino-acid sequence, 350 residues long: Olfactory receptor 52I2 (350 aa).

The Extracellular segment spans residues 1–55; that stretch reads MCQQILRDCILLIHHLCINRKKVSLVMLGPAYNHTMETPASFLLVGIPGLQSSHL. An N-linked (GlcNAc...) asparagine glycan is attached at Asn33. The helical transmembrane segment at 56–76 threads the bilayer; the sequence is WLAISLSAMYIIALLGNTIIV. At 77 to 84 the chain is on the cytoplasmic side; the sequence is TAIWMDST. Residues 85–105 form a helical membrane-spanning segment; the sequence is RHEPMYCFLCVLAAVDIVMAS. Over 106–129 the chain is Extracellular; that stretch reads SVVPKMVSIFCSGDSSISFSACFT. A disulfide bond links Cys127 and Cys219. The helical transmembrane segment at 130–150 threads the bilayer; sequence QMFFVHLATAVETGLLLTMAF. The Cytoplasmic segment spans residues 151–169; the sequence is DRYVAICKPLHYKRILTPQ. The chain crosses the membrane as a helical span at residues 170–190; sequence VMLGMSMAITIRAIIAITPLS. The Extracellular portion of the chain corresponds to 191 to 226; sequence WMVSHLPFCGSNVVVHSYCEHIALARLACADPVPSS. A helical transmembrane segment spans residues 227 to 247; the sequence is LYSLIGSSLMVGSDVAFIAAS. The Cytoplasmic segment spans residues 248-267; the sequence is YILILKAVFGLSSKTAQLKA. The helical transmembrane segment at 268-288 threads the bilayer; it reads LSTCGSHVGVMALYYLPGMAS. The Extracellular portion of the chain corresponds to 289–304; it reads IYAAWLGQDVVPLHTQ. Residues 305 to 325 traverse the membrane as a helical segment; it reads VLLADLYVIIPATLNPIIYGM. Residues 326-350 are Cytoplasmic-facing; it reads RTKQLRERIWSYLMHVLFDHSNLGS.

The protein belongs to the G-protein coupled receptor 1 family.

Its subcellular location is the cell membrane. Odorant receptor. The sequence is that of Olfactory receptor 52I2 (OR52I2) from Homo sapiens (Human).